Here is a 119-residue protein sequence, read N- to C-terminus: Large ribosomal subunit protein uL18 (119 aa).

It belongs to the universal ribosomal protein uL18 family. Part of the 50S ribosomal subunit; part of the 5S rRNA/L5/L18/L25 subcomplex. Contacts the 5S and 23S rRNAs.

This is one of the proteins that bind and probably mediate the attachment of the 5S RNA into the large ribosomal subunit, where it forms part of the central protuberance. In Chlorobaculum tepidum (strain ATCC 49652 / DSM 12025 / NBRC 103806 / TLS) (Chlorobium tepidum), this protein is Large ribosomal subunit protein uL18.